The primary structure comprises 78 residues: Sec-independent protein translocase protein TatA (78 aa).

The helical transmembrane segment at 1-21 threads the bilayer; that stretch reads MFGRIGLPEILLILAIALIIF. The segment at 50 to 78 is disordered; sequence EVNEVEEEVKENKSSDVKENEDNKTEKST. Positions 59–78 are enriched in basic and acidic residues; sequence KENKSSDVKENEDNKTEKST.

The protein belongs to the TatA/E family. As to quaternary structure, forms a complex with TatC.

It is found in the cell membrane. Its function is as follows. Part of the twin-arginine translocation (Tat) system that transports large folded proteins containing a characteristic twin-arginine motif in their signal peptide across membranes. TatA could form the protein-conducting channel of the Tat system. The protein is Sec-independent protein translocase protein TatA of Natranaerobius thermophilus (strain ATCC BAA-1301 / DSM 18059 / JW/NM-WN-LF).